A 492-amino-acid polypeptide reads, in one-letter code: V-type proton ATPase subunit B 2 (492 aa).

Belongs to the ATPase alpha/beta chains family. As to quaternary structure, V-ATPase is a heteromultimeric enzyme composed of a peripheral catalytic V1 complex (main components: subunits A, B, C, D, E, and F) attached to an integral membrane V0 proton pore complex (main component: the proteolipid protein).

Its function is as follows. Non-catalytic subunit of the peripheral V1 complex of vacuolar ATPase. V-ATPase is responsible for acidifying a variety of intracellular compartments in eukaryotic cells. This Acetabularia acetabulum (Mermaid's wine glass) protein is V-type proton ATPase subunit B 2.